The following is a 312-amino-acid chain: Glyoxylate/hydroxypyruvate reductase A (312 aa).

Arginine 227 is a catalytic residue. The Proton donor role is filled by histidine 275.

It belongs to the D-isomer specific 2-hydroxyacid dehydrogenase family. GhrA subfamily.

It localises to the cytoplasm. It carries out the reaction glycolate + NADP(+) = glyoxylate + NADPH + H(+). The enzyme catalyses (R)-glycerate + NAD(+) = 3-hydroxypyruvate + NADH + H(+). The catalysed reaction is (R)-glycerate + NADP(+) = 3-hydroxypyruvate + NADPH + H(+). Functionally, catalyzes the NADPH-dependent reduction of glyoxylate and hydroxypyruvate into glycolate and glycerate, respectively. The chain is Glyoxylate/hydroxypyruvate reductase A from Salmonella dublin (strain CT_02021853).